Here is a 309-residue protein sequence, read N- to C-terminus: Malate dehydrogenase (309 aa).

NAD(+)-binding positions include 6 to 11 (GSGRVG) and Asp-31. Arg-80 and Arg-86 together coordinate substrate. NAD(+) contacts are provided by residues Asn-93 and 116–118 (TTN). Residues Asn-118 and Arg-149 each coordinate substrate. His-173 serves as the catalytic Proton acceptor.

The protein belongs to the LDH/MDH superfamily. In terms of assembly, homotetramer.

The catalysed reaction is (S)-malate + NAD(+) = oxaloacetate + NADH + H(+). Functionally, catalyzes the reversible oxidation of malate to oxaloacetate. Exhibits higher specific activity for oxaloacetate reduction than for malate oxidation in vitro. Has a strong preference for NAD. Can use NADPH for oxaloacetate reduction, but activity decreases more than 90%. No activity detected with NADP(+) and malate. This Pyrobaculum islandicum (strain DSM 4184 / JCM 9189 / GEO3) protein is Malate dehydrogenase.